The chain runs to 630 residues: Probable potassium transport system protein Kup 1 (630 aa).

Transmembrane regions (helical) follow at residues 15-35 (LLAM…TSPL), 58-78 (LISL…VLFL), 104-124 (TAIL…DAMI), 142-162 (PALS…LFAV), 173-193 (FFGP…FMHI), 208-228 (AVAF…AVFL), 252-272 (WFTV…AFVL), 290-310 (ALLP…QAVI), 342-362 (IYLP…VFIF), 368-388 (LATA…VLAF), 399-419 (AWWA…FLGA), and 424-444 (IHDG…IMWT).

This sequence belongs to the HAK/KUP transporter (TC 2.A.72) family.

It localises to the cell inner membrane. It catalyses the reaction K(+)(in) + H(+)(in) = K(+)(out) + H(+)(out). Transport of potassium into the cell. Likely operates as a K(+):H(+) symporter. The chain is Probable potassium transport system protein Kup 1 from Sinorhizobium medicae (strain WSM419) (Ensifer medicae).